A 390-amino-acid polypeptide reads, in one-letter code: Homoserine O-acetyltransferase (390 aa).

The AB hydrolase-1 domain maps to 55 to 366 (NAILINHAFS…ESDCGHDAFL (312 aa)). The active-site Nucleophile is serine 163. Arginine 232 lines the substrate pocket. Catalysis depends on residues aspartate 329 and histidine 362. Aspartate 363 is a substrate binding site.

Belongs to the AB hydrolase superfamily. MetX family. As to quaternary structure, homodimer.

The protein localises to the cytoplasm. It carries out the reaction L-homoserine + acetyl-CoA = O-acetyl-L-homoserine + CoA. The protein operates within amino-acid biosynthesis; L-methionine biosynthesis via de novo pathway; O-acetyl-L-homoserine from L-homoserine: step 1/1. Transfers an acetyl group from acetyl-CoA to L-homoserine, forming acetyl-L-homoserine. This Desulfotalea psychrophila (strain LSv54 / DSM 12343) protein is Homoserine O-acetyltransferase.